A 266-amino-acid polypeptide reads, in one-letter code: NADP-dependent mannitol dehydrogenase (266 aa).

The NADP(+) site is built by asparagine 107 and lysine 140. The active-site Proton donor is serine 159. NADP(+) contacts are provided by tyrosine 174, lysine 178, isoleucine 206, and threonine 208. Residue tyrosine 174 is the Proton acceptor of the active site. Lysine 178 acts as the Lowers pKa of active site Tyr in catalysis.

It belongs to the short-chain dehydrogenases/reductases (SDR) family. In terms of assembly, homotetramer.

The enzyme catalyses D-mannitol + NADP(+) = D-fructose + NADPH + H(+). Catalyzes the interconversion between D-mannitol and D-fructose. Plays a key role in liamocins biosynthesis by providing the mannitol moity that is linked to 3,5-dihydroxydecanoic acid (provided by the HR-PKS PKS1) via ester bond formation catalyzed by the esterase EST1. In Aureobasidium melanogenum (Aureobasidium pullulans var. melanogenum), this protein is NADP-dependent mannitol dehydrogenase.